Consider the following 177-residue polypeptide: ATP-dependent protease subunit HslV (177 aa).

The active site involves threonine 2. Residues alanine 159, aspartate 162, and threonine 165 each coordinate Na(+).

This sequence belongs to the peptidase T1B family. HslV subfamily. A double ring-shaped homohexamer of HslV is capped on each side by a ring-shaped HslU homohexamer. The assembly of the HslU/HslV complex is dependent on binding of ATP.

Its subcellular location is the cytoplasm. The catalysed reaction is ATP-dependent cleavage of peptide bonds with broad specificity.. With respect to regulation, allosterically activated by HslU binding. Protease subunit of a proteasome-like degradation complex believed to be a general protein degrading machinery. This is ATP-dependent protease subunit HslV from Lactobacillus leichmannii.